Reading from the N-terminus, the 85-residue chain is Probable oxaloacetate decarboxylase gamma chain (85 aa).

The chain crosses the membrane as a helical span at residues 11–33; sequence AATLMVTGMAVVFIFLTILVYLV.

Belongs to the OadG family. In terms of assembly, heterotrimer of an alpha, a beta and a gamma subunit. Na(+) is required as a cofactor.

The protein resides in the cell membrane. The enzyme catalyses oxaloacetate + 2 Na(+)(in) + H(+) = pyruvate + 2 Na(+)(out) + CO2. Functionally, catalyzes the decarboxylation of oxaloacetate coupled to Na(+) translocation. The protein is Probable oxaloacetate decarboxylase gamma chain of Vibrio parahaemolyticus serotype O3:K6 (strain RIMD 2210633).